Reading from the N-terminus, the 250-residue chain is Testis-expressed protein 101 (250 aa).

The N-terminal stretch at methionine 1–asparagine 25 is a signal peptide. 4 N-linked (GlcNAc...) asparagine glycosylation sites follow: asparagine 45, asparagine 110, asparagine 134, and asparagine 160. Positions cysteine 141–phenylalanine 215 constitute a UPAR/Ly6 domain. Glycine 224 is lipidated: GPI-anchor amidated glycine. Positions alanine 225–proline 250 are cleaved as a propeptide — removed in mature form.

Interacts with VAMP3. Interacts with LY6K. Interacts with DPEP3; co-localized on the cell surface of spermatocytes, spermatids, and testicular spermatozoa, co-localized only in cytoplasmic droplets of caput and corpus epididymal sperm. Interacts with ADAM5. Post-translationally, N-glycosylated; by high mannose and/or biantennary complex and/or certain types of hybrid oligosaccharides; possesses different oligosaccharides chains according to its subcellular localization in the testis. In terms of processing, sheds from membrane raft by ACE and released from the cell surface of epididymal sperm while it passes through the caput epididymis leading to disappearance of TEX101 on spermatozoa; is essential to produce fertile spermatozoa. In terms of tissue distribution, detected in testis.

It localises to the cell membrane. The protein resides in the membrane raft. It is found in the cytoplasmic vesicle. Its subcellular location is the secretory vesicle. The protein localises to the acrosome. It localises to the secreted. Functionally, plays a role in fertilization by controlling binding of sperm to zona pellucida and migration of spermatozoa into the oviduct. May play a role in signal transduction and promote protein tyrosine phosphorylation. In Rattus norvegicus (Rat), this protein is Testis-expressed protein 101.